Here is a 530-residue protein sequence, read N- to C-terminus: Na(+)/H(+) antiporter NhaB (530 aa).

The next 13 membrane-spanning stretches (helical) occupy residues 13–33 (FLGK…IINP), 34–54 (FVFF…EFIF), 64–84 (PLQP…TSPA), 90–110 (LVAN…IYFM), 113–133 (LLLY…LLSL), 136–156 (CLMA…AVVI), 205–225 (LLMH…VGEP), 234–254 (AGWL…PVFM), 306–326 (ALIA…VGLI), 351–371 (EEAL…AVII), 378–400 (PIIS…IANG), 450–470 (ATPN…APLI), and 481–501 (ALPY…FMLL).

It belongs to the NhaB Na(+)/H(+) (TC 2.A.34) antiporter family.

It localises to the cell inner membrane. The enzyme catalyses 2 Na(+)(in) + 3 H(+)(out) = 2 Na(+)(out) + 3 H(+)(in). Na(+)/H(+) antiporter that extrudes sodium in exchange for external protons. This is Na(+)/H(+) antiporter NhaB from Photobacterium profundum (strain SS9).